The chain runs to 68 residues: Large ribosomal subunit protein bL33c (68 aa).

Belongs to the bacterial ribosomal protein bL33 family.

The protein resides in the plastid. Its subcellular location is the chloroplast. The sequence is that of Large ribosomal subunit protein bL33c from Nymphaea alba (White water-lily).